The sequence spans 162 residues: 2-C-methyl-D-erythritol 2,4-cyclodiphosphate synthase (162 aa).

Asp-8 and His-10 together coordinate a divalent metal cation. 4-CDP-2-C-methyl-D-erythritol 2-phosphate-binding positions include 8 to 10 (DVH) and 34 to 35 (HS). Position 42 (His-42) interacts with a divalent metal cation. Residues 56-58 (DIG), 61-65 (FPDND), 132-135 (TTTE), Phe-139, and Lys-142 each bind 4-CDP-2-C-methyl-D-erythritol 2-phosphate.

Belongs to the IspF family. Homotrimer. The cofactor is a divalent metal cation.

It catalyses the reaction 4-CDP-2-C-methyl-D-erythritol 2-phosphate = 2-C-methyl-D-erythritol 2,4-cyclic diphosphate + CMP. It participates in isoprenoid biosynthesis; isopentenyl diphosphate biosynthesis via DXP pathway; isopentenyl diphosphate from 1-deoxy-D-xylulose 5-phosphate: step 4/6. In terms of biological role, involved in the biosynthesis of isopentenyl diphosphate (IPP) and dimethylallyl diphosphate (DMAPP), two major building blocks of isoprenoid compounds. Catalyzes the conversion of 4-diphosphocytidyl-2-C-methyl-D-erythritol 2-phosphate (CDP-ME2P) to 2-C-methyl-D-erythritol 2,4-cyclodiphosphate (ME-CPP) with a corresponding release of cytidine 5-monophosphate (CMP). The chain is 2-C-methyl-D-erythritol 2,4-cyclodiphosphate synthase from Pelotomaculum thermopropionicum (strain DSM 13744 / JCM 10971 / SI).